Here is a 351-residue protein sequence, read N- to C-terminus: DNA polymerase IV (351 aa).

Residues 4–185 (IIHVDMDCFF…LPLAKIPGVG (182 aa)) form the UmuC domain. Mg(2+) contacts are provided by aspartate 8 and aspartate 103. The active site involves glutamate 104.

Belongs to the DNA polymerase type-Y family. In terms of assembly, monomer. Requires Mg(2+) as cofactor.

The protein localises to the cytoplasm. It carries out the reaction DNA(n) + a 2'-deoxyribonucleoside 5'-triphosphate = DNA(n+1) + diphosphate. Its function is as follows. Poorly processive, error-prone DNA polymerase involved in untargeted mutagenesis. Copies undamaged DNA at stalled replication forks, which arise in vivo from mismatched or misaligned primer ends. These misaligned primers can be extended by PolIV. Exhibits no 3'-5' exonuclease (proofreading) activity. May be involved in translesional synthesis, in conjunction with the beta clamp from PolIII. In Shigella dysenteriae serotype 1 (strain Sd197), this protein is DNA polymerase IV.